We begin with the raw amino-acid sequence, 379 residues long: Trans-prenyltransferase abpB (379 aa).

Substrate-binding positions include 90–91 (RL), Arg112, Lys197, Arg264, Lys266, Tyr268, and Tyr338.

The protein belongs to the tryptophan dimethylallyltransferase family.

The catalysed reaction is aspulvinone E + 2 dimethylallyl diphosphate = aspulvinone H + 2 diphosphate. It catalyses the reaction butyrolactone II + dimethylallyl diphosphate = butyrolactone I + diphosphate. It functions in the pathway secondary metabolite biosynthesis. Trans-prenyltransferase that acts in both the aspulvinones and butyrolactones pathways. Prenylates aspulvinone E and butyrolactone II to yield repectively aspulvinone H and butyrolactone I. The protein is Trans-prenyltransferase abpB of Aspergillus terreus (strain NIH 2624 / FGSC A1156).